Consider the following 177-residue polypeptide: Ubiquitin-conjugating enzyme E2 C (177 aa).

The interval 1–31 (MSGQNIDPAANQVRQKERPRDMTTSKERHSV) is disordered. Basic and acidic residues predominate over residues 14 to 30 (RQKERPRDMTTSKERHS). The UBC core domain maps to 30-175 (SVSKRLQQEL…LHEKYKTAQS (146 aa)). C114 (glycyl thioester intermediate) is an active-site residue.

This sequence belongs to the ubiquitin-conjugating enzyme family. In terms of assembly, component of the APC/C complex. Post-translationally, autoubiquitinated by the APC/C complex, leading to its degradation by the proteasome.

The enzyme catalyses S-ubiquitinyl-[E1 ubiquitin-activating enzyme]-L-cysteine + [E2 ubiquitin-conjugating enzyme]-L-cysteine = [E1 ubiquitin-activating enzyme]-L-cysteine + S-ubiquitinyl-[E2 ubiquitin-conjugating enzyme]-L-cysteine.. It carries out the reaction S-ubiquitinyl-[E1 ubiquitin-activating enzyme]-L-cysteine + [acceptor protein]-L-lysine = [E1 ubiquitin-activating enzyme]-L-cysteine + N(6)-monoubiquitinyl-[acceptor protein]-L-lysine.. It participates in protein modification; protein ubiquitination. Its function is as follows. Catalyzes the covalent attachment of ubiquitin to other proteins. Acts as an essential factor of the anaphase promoting complex/cyclosome (APC/C), a cell cycle-regulated ubiquitin ligase that is essential for the transition from metaphase to anaphase in mitosis. Involved in both degradation of proteins responsible for maintaining sister chromatid cohesion at the onset of anaphase and of mitotic cyclins A and B at the exit of mitosis. Acts by initiating polyubiquitin chains on APC/C substrates, leading to the degradation of APC/C substrates by the proteasome and promoting mitotic exit. This chain is Ubiquitin-conjugating enzyme E2 C (UBE2C), found in Spisula solidissima (Atlantic surf-clam).